Consider the following 135-residue polypeptide: Galectin-1 (135 aa).

N-acetylalanine is present on alanine 2. The region spanning glycine 4–glutamate 135 is the Galectin domain. 2 positions are modified to N6-acetyllysine: lysine 13 and lysine 29. A Phosphoserine modification is found at serine 30. Residues histidine 45 to arginine 49, histidine 53, asparagine 62, and tryptophan 69 to glutamate 72 contribute to the a beta-D-galactoside site. Position 108 is an N6-acetyllysine; alternate (lysine 108). Residue lysine 108 is modified to N6-succinyllysine; alternate. Lysine 128 carries the post-translational modification N6-acetyllysine.

In terms of assembly, homodimer. Binds LGALS3BP. Interacts with CD2, CD3, CD4, CD6, CD7, CD43, ALCAM and CD45. Interacts with laminin (via poly-N-acetyllactosamine). Interacts with SUSD2. Interacts with cargo receptor TMED10; the interaction mediates the translocation from the cytoplasm into the ERGIC (endoplasmic reticulum-Golgi intermediate compartment) and thereby secretion.

It localises to the secreted. It is found in the extracellular space. The protein resides in the extracellular matrix. Its subcellular location is the cytoplasm. Lectin that binds beta-galactoside and a wide array of complex carbohydrates. Plays a role in regulating apoptosis, cell proliferation and cell differentiation. Inhibits CD45 protein phosphatase activity and therefore the dephosphorylation of Lyn kinase. Strong inducer of T-cell apoptosis. The protein is Galectin-1 (LGALS1) of Ovis aries (Sheep).